A 649-amino-acid chain; its full sequence is Golgin subfamily A member 6-like protein 26 (649 aa).

Disordered regions lie at residues 1 to 94 (MWPQ…HQEA), 300 to 330 (QEEKIREQEEKMRRQEEMMWEKEEKMRRQEE), 358 to 440 (EKMH…EMWR), 455 to 572 (KEKM…REQE), and 584 to 620 (EQEEMMQEQEEKMWEQEEKMCEQEEKMQEQEEKMRRQ). The segment covering 10–23 (HPHLPTHPHLPTHP) has biased composition (low complexity). The segment covering 25–46 (MSKETRQSKLAEAKEQLTDHHP) has biased composition (basic and acidic residues). 2 stretches are compositionally biased toward polar residues: residues 47-57 (QTNPSVGTAAS) and 65-77 (NNGTNPETTTSGG). Residues 80-94 (SPEDEQKASHQHQEA) are compositionally biased toward basic and acidic residues. A coiled-coil region spans residues 151–644 (LEQALSAVAT…EEKMQEHQEH (494 aa)).

This sequence belongs to the GOLGA6 family.

The polypeptide is Golgin subfamily A member 6-like protein 26 (GOLGA6L26) (Homo sapiens (Human)).